We begin with the raw amino-acid sequence, 489 residues long: Cytochrome P450 monooxygenase ataF (489 aa).

A helical transmembrane segment spans residues 12 to 32 (WLEHSAVIATLFAFGTALFLV). N-linked (GlcNAc...) asparagine glycosylation occurs at N289. C434 contacts heme.

The protein belongs to the cytochrome P450 family. Heme serves as cofactor.

It localises to the membrane. It participates in mycotoxin biosynthesis. Its function is as follows. Cytochrome P450 monooxygenase; part of the gene cluster that mediates the biosynthesis of acetylaranotin, a member of the epipolythiodioxopiperazine (ETP) class of toxins characterized by a disulfide-bridged cyclic dipeptide. The first step of acetylaranotin biosynthesis is performed by the NRPS ataP which produces diketopiperazine cyclo-L-Phe-L-Phe via the condensation of 2 phenylalanines (L-Phe). The ataC domain of ataTC then catalyzes the formation of bishydroxylation of cyclo-L-Phe-L-Phe. The glutathione S-transferase domain ataG in ataIMG further catalyzes the conjugation of two glutathiones to the bishydroxylated intermediate. Next, the dipeptidase ataJ removes the Glu residues. The following step is performed by the carbon sulfur lyase domain ataI of ataIMG which may convert the bis-cysteinyl adduct to yield an epidithiol intermediate. The ataT domain from ataTC then catalyzes the oxidation of the free dithiols, followed by a cyclization step catalyzed by the cytochrome P450 ataF. AtaF probably acts as an epoxidase to promote a dual epoxidation formation at C8 and C9 along with C8' and C9', followed by the spontaneous nucleophilic attack of the amide nitrogens N10 and N10' to yield an intermediate with the pyrrolidine partial structure. The final steps of acetylaranotin biosynthesis involve the acetylation and ring rearrangement of an epitetrathiodiketopiperazine intermediate to produce acetylaranotin. AtaH probably catalyzes the acetylation of epitetrathiodiketopiperazine to produce a diacetate and ataY is responsible for the formation of the dihydrooxepin moiety that converts the diacetate intermediate to acetylaranotin via acetylapoaranotin. Both enzymes could function independently in the absence of the other. The acetylaranotin bis-thiomethyltransferase ataS located outside of acetylaranotin gene cluster is the main thiomethyltransferase responsible for converting acetylaranotin and its related intermediates to their methylated forms. This chain is Cytochrome P450 monooxygenase ataF, found in Aspergillus terreus (strain NIH 2624 / FGSC A1156).